The sequence spans 623 residues: Mu-like prophage FluMu defective tail fiber protein (623 aa).

To phage Mu protein S.

The chain is Mu-like prophage FluMu defective tail fiber protein from Haemophilus influenzae (strain ATCC 51907 / DSM 11121 / KW20 / Rd).